Reading from the N-terminus, the 226-residue chain is 2-C-methyl-D-erythritol 4-phosphate cytidylyltransferase (226 aa).

It belongs to the IspD/TarI cytidylyltransferase family. IspD subfamily.

The catalysed reaction is 2-C-methyl-D-erythritol 4-phosphate + CTP + H(+) = 4-CDP-2-C-methyl-D-erythritol + diphosphate. Its pathway is isoprenoid biosynthesis; isopentenyl diphosphate biosynthesis via DXP pathway; isopentenyl diphosphate from 1-deoxy-D-xylulose 5-phosphate: step 2/6. Functionally, catalyzes the formation of 4-diphosphocytidyl-2-C-methyl-D-erythritol from CTP and 2-C-methyl-D-erythritol 4-phosphate (MEP). This Bacillus cereus (strain ATCC 10987 / NRS 248) protein is 2-C-methyl-D-erythritol 4-phosphate cytidylyltransferase.